The following is a 205-amino-acid chain: SREBP regulating gene protein (205 aa).

Over 1 to 16 (MVNLAAMVWRRLLRKR) the chain is Cytoplasmic. The chain crosses the membrane as a helical span at residues 17 to 35 (WVLALVFGLSLVYFLSSTF). Over 36–205 (KQEERAVRDR…GESPPELFPA (170 aa)) the chain is Lumenal. A glycan (N-linked (GlcNAc...) asparagine) is linked at Asn67.

It belongs to the SPRING family. Interacts with SCAP.

The protein localises to the golgi apparatus membrane. Positively regulates hepatic SREBP signaling pathway by modulating the proper localization of SCAP (SREBP cleavage-activating protein) to the endoplasmic reticulum, thereby controlling the level of functional SCAP. The protein is SREBP regulating gene protein of Homo sapiens (Human).